The following is a 408-amino-acid chain: Serine/threonine-protein kinase UCNL (408 aa).

The region spanning 21-341 (IKALKILGKG…AAEIKELAFF (321 aa)) is the Protein kinase domain. ATP is bound by residues 27-35 (LGKGATGTV) and Lys54. The active-site Proton acceptor is the Asp152. The AGC-kinase C-terminal domain occupies 342 to 408 (AGVRWDLLTE…CRKNDPFIEF (67 aa)).

It belongs to the protein kinase superfamily. AGC Ser/Thr protein kinase family. In terms of tissue distribution, expressed in the epidermis and cortex of the transition zone of the root apex. Expressed in rosette leaves, stems, flowers and siliques.

It is found in the cytoplasm. The protein resides in the nucleus. It catalyses the reaction L-seryl-[protein] + ATP = O-phospho-L-seryl-[protein] + ADP + H(+). The enzyme catalyses L-threonyl-[protein] + ATP = O-phospho-L-threonyl-[protein] + ADP + H(+). In terms of biological role, regulates planar ovule integument development. The sequence is that of Serine/threonine-protein kinase UCNL from Arabidopsis thaliana (Mouse-ear cress).